Here is a 773-residue protein sequence, read N- to C-terminus: Elongin-A (773 aa).

In terms of domain architecture, TFIIS N-terminal spans 4–79 (ESALQVVEKL…AQWKKLVPVE (76 aa)). Residues 79-93 (ERNNEAEDQDFEKSN) show a composition bias toward basic and acidic residues. The disordered stretch occupies residues 79–480 (ERNNEAEDQD…PRKVPTDVLP (402 aa)). Polar residues predominate over residues 112–124 (YQESWQASGSQPY). Positions 136–156 (LPELERPHKVAHGHERRDERK) are enriched in basic and acidic residues. Residues 162 to 174 (SPPYSSDPESSDY) are compositionally biased toward low complexity. A Phosphoserine modification is found at Ser-195. Over residues 239 to 248 (KPHKSSHKEK) the composition is skewed to basic residues. Basic and acidic residues-rich tracts occupy residues 249–265 (RPVD…MGRE) and 271–304 (SSKE…EGNS). At Ser-310 the chain carries Phosphoserine. 2 stretches are compositionally biased toward basic and acidic residues: residues 317 to 339 (SDNH…KNKQ) and 368 to 380 (QEGK…DRKS). Residues Ser-380 and Ser-383 each carry the phosphoserine modification. Lys-430 carries the post-translational modification N6-acetyllysine. The residue at position 515 (Ser-515) is a Phosphoserine. An activation domain region spans residues 521–680 (EAGFTGRRMN…PPRDVRRRQE (160 aa)). Residues 549–558 (TLHQQCIRVL) form a BC-box region. The F-box domain occupies 565-609 (IFEVGGVPYSVLEPVLERCTPDQLYRIEECNHVLIEETDQLWKVH). A disordered region spans residues 671 to 747 (PPRDVRRRQE…VASSSVSYDP (77 aa)). A compositionally biased stretch (low complexity) spans 704–718 (SSHVPASNSSSSFHS). Polar residues predominate over residues 728-744 (PSTSSAHLAPVASSSVS).

As to quaternary structure, heterotrimer of an A (ELOA, ELOA2 or ELOA3P), ELOB and ELOC subunit. Part of a multisubunit ubiquitin ligase complex consisting of elongin BC complex (ELOB and ELOC), elongin A/ELOA, RBX1 and CUL5. Interacts with ERCC6; the interaction is induced by DNA damaging agents or inhibitors of RNA polymerase II elongation. Interacts (via BC-box) with CUL5.

The protein resides in the nucleus. Its function is as follows. SIII, also known as elongin, is a general transcription elongation factor that increases the RNA polymerase II transcription elongation past template-encoded arresting sites. Subunit A is transcriptionally active and its transcription activity is strongly enhanced by binding to the dimeric complex of the SIII regulatory subunits B and C (elongin BC complex). As part of a multisubunit complex composed of elongin BC complex (ELOB and ELOC), elongin A/ELOA, RBX1 and CUL5; polyubiquitinates monoubiquitinated POLR2A. The chain is Elongin-A (Eloa) from Rattus norvegicus (Rat).